The sequence spans 395 residues: MAKAKFERTKPHCNIGTIGHVDHGKTSLTAAITKVLAESGGATFRAYDSIDAAPEERARGITIATAHVEYETANRHYAHVDCPGHADYVKNMITGAAQMDGAILVVSAADGPMPQTREHILLARQVGVPALVVFLNKMDMADPDLVELVEMEVRDLLSKYEFPGDDIPIIKGSALCALEDSNAELGREAILKLMEAVDSYIPQPERPKDKPFLMPVEDVFSISGRGTVVTGRVERGIIKVGDEVEIVGLKATVKTTVTGVEMFRKLLDQGEAGDNIGALLRGTKREDVERGQVLAAPGSITPHTNFSGSVYILNKEEGGRHTPFFTNYRPQFYFRTTDVTGVVTLPEGVEMVMPGDNVTVSVELIAPIAMDEGLRFAIREGGRTVGSGVVASITK.

A tr-type G domain is found at 10-205 (KPHCNIGTIG…AVDSYIPQPE (196 aa)). A G1 region spans residues 19–26 (GHVDHGKT). 19-26 (GHVDHGKT) lines the GTP pocket. Threonine 26 contributes to the Mg(2+) binding site. The tract at residues 60-64 (GITIA) is G2. Residues 81 to 84 (DCPG) are G3. GTP is bound by residues 81–85 (DCPGH) and 136–139 (NKMD). The segment at 136–139 (NKMD) is G4. Residues 173 to 175 (SAL) form a G5 region.

It belongs to the TRAFAC class translation factor GTPase superfamily. Classic translation factor GTPase family. EF-Tu/EF-1A subfamily. As to quaternary structure, monomer.

Its subcellular location is the cytoplasm. It catalyses the reaction GTP + H2O = GDP + phosphate + H(+). Its function is as follows. GTP hydrolase that promotes the GTP-dependent binding of aminoacyl-tRNA to the A-site of ribosomes during protein biosynthesis. This is Elongation factor Tu from Acidiphilium cryptum (strain JF-5).